Reading from the N-terminus, the 216-residue chain is MKQDPRFPNLSILNHPLIQHKLTHMRDKDTSTRTFRELLREITLLMGYEITRNLPLTSRHIDTPMGPMEAPVIAGRKLAVVPVLRAGVGMSDGLVELIPSARIGHIGVYRDDQHRPVEYLVRLPDLEDRTFILCDPMVATGYSAVHAVDVMKKRGVPDENILFLALVAAPEGVEVFQKAHPGVKLFVASLDSHLDENAYIIPGLGDAGDRLFGTKN.

5-phospho-alpha-D-ribose 1-diphosphate-binding positions include Arg85, Arg110, and 135-143; that span reads DPMVATGYS. Uracil contacts are provided by residues Ile200 and 205–207; that span reads GDA. A 5-phospho-alpha-D-ribose 1-diphosphate-binding site is contributed by Asp206.

This sequence belongs to the UPRTase family. Mg(2+) serves as cofactor.

It catalyses the reaction UMP + diphosphate = 5-phospho-alpha-D-ribose 1-diphosphate + uracil. The protein operates within pyrimidine metabolism; UMP biosynthesis via salvage pathway; UMP from uracil: step 1/1. With respect to regulation, allosterically activated by GTP. Functionally, catalyzes the conversion of uracil and 5-phospho-alpha-D-ribose 1-diphosphate (PRPP) to UMP and diphosphate. The polypeptide is Uracil phosphoribosyltransferase (Ralstonia pickettii (strain 12J)).